The chain runs to 314 residues: DNA topoisomerase 1 (314 aa).

The 242-residue stretch at 73-314 folds into the Topo IB-type catalytic domain; that stretch reads GKMHVQRRNS…TDYITNTQTV (242 aa). Tyr-273 serves as the catalytic O-(3'-phospho-DNA)-tyrosine intermediate.

It belongs to the type IB topoisomerase family.

The enzyme catalyses ATP-independent breakage of single-stranded DNA, followed by passage and rejoining.. Its function is as follows. Releases the supercoiling and torsional tension of DNA introduced during the DNA replication and transcription by transiently cleaving and rejoining one strand of the DNA duplex. Introduces a single-strand break via transesterification at a target site in duplex DNA. The scissile phosphodiester is attacked by the catalytic tyrosine of the enzyme, resulting in the formation of a DNA-(3'-phosphotyrosyl)-enzyme intermediate and the expulsion of a 5'-OH DNA strand. The free DNA strand then undergoes passage around the unbroken strand thus removing DNA supercoils. Finally, in the religation step, the DNA 5'-OH attacks the covalent intermediate to expel the active-site tyrosine and restore the DNA phosphodiester backbone. The sequence is that of DNA topoisomerase 1 (TOP1) from Oryctolagus cuniculus (Rabbit).